The sequence spans 620 residues: Chaperone protein HscA homolog (620 aa).

Belongs to the heat shock protein 70 family.

Its function is as follows. Chaperone involved in the maturation of iron-sulfur cluster-containing proteins. Has a low intrinsic ATPase activity which is markedly stimulated by HscB. The chain is Chaperone protein HscA homolog from Shewanella oneidensis (strain ATCC 700550 / JCM 31522 / CIP 106686 / LMG 19005 / NCIMB 14063 / MR-1).